The sequence spans 307 residues: Bifunctional protein FolD 3 (307 aa).

Residues 169-171, Ser-194, and Ile-235 each bind NADP(+); that span reads GRS.

It belongs to the tetrahydrofolate dehydrogenase/cyclohydrolase family. As to quaternary structure, homodimer.

It catalyses the reaction (6R)-5,10-methylene-5,6,7,8-tetrahydrofolate + NADP(+) = (6R)-5,10-methenyltetrahydrofolate + NADPH. The enzyme catalyses (6R)-5,10-methenyltetrahydrofolate + H2O = (6R)-10-formyltetrahydrofolate + H(+). The protein operates within one-carbon metabolism; tetrahydrofolate interconversion. In terms of biological role, catalyzes the oxidation of 5,10-methylenetetrahydrofolate to 5,10-methenyltetrahydrofolate and then the hydrolysis of 5,10-methenyltetrahydrofolate to 10-formyltetrahydrofolate. This is Bifunctional protein FolD 3 from Ectopseudomonas mendocina (strain ymp) (Pseudomonas mendocina).